The sequence spans 166 residues: Large ribosomal subunit protein uL10 (166 aa).

The protein belongs to the universal ribosomal protein uL10 family. As to quaternary structure, part of the ribosomal stalk of the 50S ribosomal subunit. The N-terminus interacts with L11 and the large rRNA to form the base of the stalk. The C-terminus forms an elongated spine to which L12 dimers bind in a sequential fashion forming a multimeric L10(L12)X complex.

Forms part of the ribosomal stalk, playing a central role in the interaction of the ribosome with GTP-bound translation factors. This Staphylococcus epidermidis (strain ATCC 35984 / DSM 28319 / BCRC 17069 / CCUG 31568 / BM 3577 / RP62A) protein is Large ribosomal subunit protein uL10.